We begin with the raw amino-acid sequence, 185 residues long: UPF0397 protein LBA0922 (185 aa).

5 helical membrane-spanning segments follow: residues 11 to 31 (VVAI…TSIP), 45 to 65 (FLAF…GFIG), 72 to 92 (IMYG…GWII), 111 to 131 (IILF…VVAP), and 146 to 166 (FVQG…IGTI).

This sequence belongs to the UPF0397 family.

The protein localises to the cell membrane. This is UPF0397 protein LBA0922 from Lactobacillus acidophilus (strain ATCC 700396 / NCK56 / N2 / NCFM).